The chain runs to 316 residues: Mycothiol acetyltransferase (316 aa).

N-acetyltransferase domains lie at 16–153 and 156–316; these read REVR…VPAV and VRIR…PAAN. Glutamate 36 contacts 1D-myo-inositol 2-(L-cysteinylamino)-2-deoxy-alpha-D-glucopyranoside. Acetyl-CoA is bound by residues 83–85 and 91–96; these read LVV and RRGIGS. 1D-myo-inositol 2-(L-cysteinylamino)-2-deoxy-alpha-D-glucopyranoside contacts are provided by glutamate 183, lysine 228, and glutamate 238. Acetyl-CoA contacts are provided by residues 242–244 and 249–255; these read VGV and QGRGLGQ. Tyrosine 283 lines the 1D-myo-inositol 2-(L-cysteinylamino)-2-deoxy-alpha-D-glucopyranoside pocket. Position 288-293 (288-293) interacts with acetyl-CoA; that stretch reads NVAAVR.

Belongs to the acetyltransferase family. MshD subfamily. Monomer.

It carries out the reaction 1D-myo-inositol 2-(L-cysteinylamino)-2-deoxy-alpha-D-glucopyranoside + acetyl-CoA = mycothiol + CoA + H(+). Its function is as follows. Catalyzes the transfer of acetyl from acetyl-CoA to desacetylmycothiol (Cys-GlcN-Ins) to form mycothiol. This Mycobacterium avium (strain 104) protein is Mycothiol acetyltransferase.